Consider the following 278-residue polypeptide: Putative cysteine-rich repeat secretory protein 17 (278 aa).

The signal sequence occupies residues 1–32; the sequence is MYSLSSVSKHLILVHILALVATQLLLIRSVSS. Gnk2-homologous domains lie at 39 to 142 and 148 to 265; these read YLNH…SIDN and YGDS…LYPF.

This sequence belongs to the cysteine-rich repeat secretory protein family.

Its subcellular location is the secreted. In Arabidopsis thaliana (Mouse-ear cress), this protein is Putative cysteine-rich repeat secretory protein 17 (CRRSP17).